A 269-amino-acid polypeptide reads, in one-letter code: Probable 3-deoxy-manno-octulosonic acid transferase (269 aa).

It localises to the cytoplasm. It catalyses the reaction an alpha-Kdo-(2-&gt;4)-alpha-Kdo-(2-&gt;6)-lipid IVA + CMP-3-deoxy-beta-D-manno-octulosonate = an alpha-Kdo-(2-&gt;4)-alpha-Kdo-(2-&gt;4)-alpha-Kdo-(2-&gt;6)-lipid IVA + CMP + H(+). It functions in the pathway bacterial outer membrane biogenesis; LPS core biosynthesis. In terms of biological role, involved in the biosynthesis of the core oligosaccharide region of lipopolysaccharide (LPS). Required for the addition of 3-deoxy-D-manno-oct-2-ulosonic acid III (KdoIII) to the KdoII residue of the inner lipopolysaccharide core. The sequence is that of Probable 3-deoxy-manno-octulosonic acid transferase from Salmonella typhimurium (strain LT2 / SGSC1412 / ATCC 700720).